The following is a 248-amino-acid chain: 3-deoxy-manno-octulosonate cytidylyltransferase (248 aa).

It belongs to the KdsB family.

The protein localises to the cytoplasm. It catalyses the reaction 3-deoxy-alpha-D-manno-oct-2-ulosonate + CTP = CMP-3-deoxy-beta-D-manno-octulosonate + diphosphate. It functions in the pathway nucleotide-sugar biosynthesis; CMP-3-deoxy-D-manno-octulosonate biosynthesis; CMP-3-deoxy-D-manno-octulosonate from 3-deoxy-D-manno-octulosonate and CTP: step 1/1. It participates in bacterial outer membrane biogenesis; lipopolysaccharide biosynthesis. Activates KDO (a required 8-carbon sugar) for incorporation into bacterial lipopolysaccharide in Gram-negative bacteria. This is 3-deoxy-manno-octulosonate cytidylyltransferase from Alteromonas mediterranea (strain DSM 17117 / CIP 110805 / LMG 28347 / Deep ecotype).